Reading from the N-terminus, the 177-residue chain is Translation initiation factor IF-3 (177 aa).

Belongs to the IF-3 family. As to quaternary structure, monomer.

The protein localises to the cytoplasm. Functionally, IF-3 binds to the 30S ribosomal subunit and shifts the equilibrium between 70S ribosomes and their 50S and 30S subunits in favor of the free subunits, thus enhancing the availability of 30S subunits on which protein synthesis initiation begins. The polypeptide is Translation initiation factor IF-3 (Acaryochloris marina (strain MBIC 11017)).